A 174-amino-acid polypeptide reads, in one-letter code: D(1B) dopamine receptor (174 aa).

Residues 1-10 (SILNLCIISV) form a helical membrane-spanning segment. At 11 to 32 (DRYWAISRPFCYERKMTQRVAL) the chain is on the cytoplasmic side. The helical transmembrane segment at 33–54 (VMVGLAWTLSILISFIPVQLHW) threads the bilayer. Topologically, residues 55–96 (HRDKVGSRDGLDPPSNLANGTPWEEAGESDRSAENCDSSLNR) are extracellular. The segment at 64–88 (GLDPPSNLANGTPWEEAGESDRSAE) is disordered. A glycan (N-linked (GlcNAc...) asparagine) is linked at Asn-95. Residues 97-119 (TYAISSSLISFYIPVAIMIVTYT) form a helical membrane-spanning segment. Topologically, residues 120–169 (RIYRIAQVQIRRISSLERAAEHAQSCRSREACAPDSGLRASIKKETKVLK) are cytoplasmic. Residues 170-174 (TLSVI) form a helical membrane-spanning segment.

The protein belongs to the G-protein coupled receptor 1 family.

It is found in the cell membrane. Its function is as follows. Dopamine receptor whose activity is mediated by G proteins which activate adenylyl cyclase. The polypeptide is D(1B) dopamine receptor (DRD5) (Bos taurus (Bovine)).